The primary structure comprises 79 residues: uncharacterized protein (79 aa).

A compositionally biased stretch (low complexity) spans 22-72 (NNNNNNNNNNNNNNNNNNNNNNNNNNNNNNNNNNNNNNNNNNNNNNNNNNN). A disordered region spans residues 22 to 79 (NNNNNNNNNNNNNNNNNNNNNNNNNNNNNNNNNNNNNNNNNNNNNNNNNNNKRFFFFG).

This is an uncharacterized protein from Dictyostelium discoideum (Social amoeba).